The chain runs to 210 residues: Protein-methionine-sulfoxide reductase heme-binding subunit MsrQ (210 aa).

The next 6 helical transmembrane spans lie at Leu8–Phe28, Val37–Thr57, Leu75–Leu95, Pro110–Asn130, Leu147–Leu167, and Glu169–Ala189.

This sequence belongs to the MsrQ family. Heterodimer of a catalytic subunit (MsrP) and a heme-binding subunit (MsrQ). It depends on FMN as a cofactor. Heme b serves as cofactor.

Its subcellular location is the cell inner membrane. In terms of biological role, part of the MsrPQ system that repairs oxidized periplasmic proteins containing methionine sulfoxide residues (Met-O), using respiratory chain electrons. Thus protects these proteins from oxidative-stress damage caused by reactive species of oxygen and chlorine generated by the host defense mechanisms. MsrPQ is essential for the maintenance of envelope integrity under bleach stress, rescuing a wide series of structurally unrelated periplasmic proteins from methionine oxidation. MsrQ provides electrons for reduction to the reductase catalytic subunit MsrP, using the quinone pool of the respiratory chain. This is Protein-methionine-sulfoxide reductase heme-binding subunit MsrQ from Pseudomonas syringae pv. tomato (strain ATCC BAA-871 / DC3000).